Here is a 351-residue protein sequence, read N- to C-terminus: Dihydroorotate dehydrogenase (quinone) (351 aa).

Residues 67-71 and Thr-91 contribute to the FMN site; that span reads AGFDK. Lys-71 is a substrate binding site. A substrate-binding site is contributed by 116–120; sequence NAMGF. Asn-145 and Asn-178 together coordinate FMN. Asn-178 contributes to the substrate binding site. Catalysis depends on Ser-181, which acts as the Nucleophile. Asn-183 contributes to the substrate binding site. The FMN site is built by Lys-214 and Thr-242. 243 to 244 provides a ligand contact to substrate; it reads NT. FMN-binding positions include Gly-262, Gly-291, and 312–313; that span reads YS.

It belongs to the dihydroorotate dehydrogenase family. Type 2 subfamily. Monomer. Requires FMN as cofactor.

It localises to the cell membrane. It carries out the reaction (S)-dihydroorotate + a quinone = orotate + a quinol. It functions in the pathway pyrimidine metabolism; UMP biosynthesis via de novo pathway; orotate from (S)-dihydroorotate (quinone route): step 1/1. Its function is as follows. Catalyzes the conversion of dihydroorotate to orotate with quinone as electron acceptor. This is Dihydroorotate dehydrogenase (quinone) (pyrD) from Helicobacter pylori (strain J99 / ATCC 700824) (Campylobacter pylori J99).